Here is a 172-residue protein sequence, read N- to C-terminus: MDLRHLIQDVPDFPKPGILFRDISPLLRDPDGWDEVMRQLGDLCTELKPDLIVGIESRGFIVGTALATNRKIGFVPVRKPGKLPGDVLGIDYSLEYGSDRLEIHADALQGHPRVLLVDDLLATGGTARATVELIEKAGGDLVGCGFVIELAALGGRQQLPVEIPVKSLIIYS.

The protein belongs to the purine/pyrimidine phosphoribosyltransferase family. Homodimer.

Its subcellular location is the cytoplasm. The enzyme catalyses AMP + diphosphate = 5-phospho-alpha-D-ribose 1-diphosphate + adenine. Its pathway is purine metabolism; AMP biosynthesis via salvage pathway; AMP from adenine: step 1/1. Functionally, catalyzes a salvage reaction resulting in the formation of AMP, that is energically less costly than de novo synthesis. The polypeptide is Adenine phosphoribosyltransferase (Prochlorococcus marinus (strain MIT 9313)).